A 692-amino-acid chain; its full sequence is Elongation factor G (692 aa).

The tr-type G domain occupies 8 to 282 (ENTRNIGIMA…AVIDYLPSPL (275 aa)). Residues 17–24 (AHIDAGKT), 81–85 (DTPGH), and 135–138 (NKMD) contribute to the GTP site.

Belongs to the TRAFAC class translation factor GTPase superfamily. Classic translation factor GTPase family. EF-G/EF-2 subfamily.

The protein resides in the cytoplasm. Functionally, catalyzes the GTP-dependent ribosomal translocation step during translation elongation. During this step, the ribosome changes from the pre-translocational (PRE) to the post-translocational (POST) state as the newly formed A-site-bound peptidyl-tRNA and P-site-bound deacylated tRNA move to the P and E sites, respectively. Catalyzes the coordinated movement of the two tRNA molecules, the mRNA and conformational changes in the ribosome. The protein is Elongation factor G of Bacillus thuringiensis subsp. konkukian (strain 97-27).